The following is a 492-amino-acid chain: GTPase-GDP dissociation stimulator arz1 (492 aa).

The protein resides in the cytoplasm. The protein localises to the nucleus. In terms of biological role, probably acts as a GEF (guanine nucleotide exchange factor) for the Rho family of small GTP-binding proteins (G proteins) that stimulates the dissociation of GDP to enable subsequent binding of GTP. May also chaperone the processing and/or trafficking of small GTPases independently of GEF activity. May be involved in the control of polarized cell growth via CDC42-mediated signaling. May also be involved in the control of cell-wall organization via RHO1-mediated signaling. This is GTPase-GDP dissociation stimulator arz1 from Schizosaccharomyces pombe (strain 972 / ATCC 24843) (Fission yeast).